We begin with the raw amino-acid sequence, 97 residues long: Co-chaperonin GroES (97 aa).

This sequence belongs to the GroES chaperonin family. As to quaternary structure, heptamer of 7 subunits arranged in a ring. Interacts with the chaperonin GroEL.

It is found in the cytoplasm. Its function is as follows. Together with the chaperonin GroEL, plays an essential role in assisting protein folding. The GroEL-GroES system forms a nano-cage that allows encapsulation of the non-native substrate proteins and provides a physical environment optimized to promote and accelerate protein folding. GroES binds to the apical surface of the GroEL ring, thereby capping the opening of the GroEL channel. The polypeptide is Co-chaperonin GroES (Proteus mirabilis (strain HI4320)).